The following is a 333-amino-acid chain: Cathepsin M (333 aa).

The signal sequence occupies residues 1 to 15 (MTSAIFLAMLCLGMA). The propeptide at 16 to 113 (LPSPAPDPIL…KSVQKRLSVN (98 aa)) is activation peptide. 2 cysteine pairs are disulfide-bonded: C135/C178 and C169/C211. C138 is an active-site residue. Residues N217, N221, and N268 are each glycosylated (N-linked (GlcNAc...) asparagine). A disulfide bridge connects residues C269 and C322. Residues H276 and N300 contribute to the active site.

It belongs to the peptidase C1 family. In terms of tissue distribution, placenta.

Its subcellular location is the lysosome. This is Cathepsin M (Ctsm) from Mus musculus (Mouse).